The sequence spans 497 residues: Cytochrome P450 26A1 (497 aa).

C442 provides a ligand contact to heme.

Belongs to the cytochrome P450 family. Heme serves as cofactor. As to expression, expressed in most fetal and adult tissues with highest levels in adult liver, heart, pituitary gland, adrenal gland, placenta and regions of the brain. Expressed at high levels in lung, pancreas, skin and uterus (at protein level). Lower expression level is detected in spleen, kidney, intestine and adipose tissue (at protein level).

The protein localises to the endoplasmic reticulum membrane. Its subcellular location is the microsome membrane. The catalysed reaction is all-trans-retinoate + reduced [NADPH--hemoprotein reductase] + O2 = all-trans-(4S)-hydroxyretinoate + oxidized [NADPH--hemoprotein reductase] + H2O + H(+). It catalyses the reaction all-trans-(4S)-hydroxyretinoate + reduced [NADPH--hemoprotein reductase] + O2 = all-trans-(4S,16)-dihydroxyretinoate + oxidized [NADPH--hemoprotein reductase] + H2O + H(+). The enzyme catalyses all-trans-retinoate + reduced [NADPH--hemoprotein reductase] + O2 = all-trans-18-hydroxyretinoate + oxidized [NADPH--hemoprotein reductase] + H2O + H(+). In terms of biological role, a cytochrome P450 monooxygenase involved in the metabolism of retinoates (RAs), the active metabolites of vitamin A, and critical signaling molecules in animals. RAs exist as at least four different isomers: all-trans-RA (atRA), 9-cis-RA, 13-cis-RA, and 9,13-dicis-RA, where atRA is considered to be the biologically active isomer, although 9-cis-RA and 13-cis-RA also have activity. Catalyzes the hydroxylation of atRA primarily at C-4 and C-18, thereby contributing to the regulation of atRA homeostasis and signaling. Hydroxylation of atRA limits its biological activity and initiates a degradative process leading to its eventual elimination. Involved in the convertion of atRA to all-trans-4-oxo-RA. Able to metabolize other RAs such as 9-cis, 13-cis and 9,13-di-cis RA. Can oxidize all-trans-13,14-dihydroretinoate (DRA) to metabolites which could include all-trans-4-oxo-DRA, all-trans-4-hydroxy-DRA, all-trans-5,8-epoxy-DRA, and all-trans-18-hydroxy-DRA. May play a role in the oxidative metabolism of xenobiotics such as tazarotenic acid. In Homo sapiens (Human), this protein is Cytochrome P450 26A1.